Reading from the N-terminus, the 119-residue chain is Small ribosomal subunit protein uS10 (119 aa).

Alanine 2 bears the N-acetylalanine mark. A Glycyl lysine isopeptide (Lys-Gly) (interchain with G-Cter in ubiquitin) cross-link involves residue lysine 4. The residue at position 8 (lysine 8) is an N6-succinyllysine; alternate. Lysine 8 participates in a covalent cross-link: Glycyl lysine isopeptide (Lys-Gly) (interchain with G-Cter in ubiquitin); alternate. Phosphothreonine is present on threonine 9. Residues lysine 34 and lysine 75 each carry the N6-acetyllysine modification. Serine 93 carries the post-translational modification Phosphoserine.

Belongs to the universal ribosomal protein uS10 family. In terms of assembly, component of the 40S small ribosomal subunit. Post-translationally, polyubiquitinated by ZNF598 via 'Lys-63'-linked ubiquitin chains when a ribosome has stalled, initiating the ribosome quality control (RQC) pathway to degrade the potentially detrimental aberrant nascent polypeptide. Deubiquitinated by OTUD3 and USP21, antagonizing ZNF598 activity. In terms of processing, ufmylated by UFL1.

It is found in the cytoplasm. Functionally, component of the small ribosomal subunit. The ribosome is a large ribonucleoprotein complex responsible for the synthesis of proteins in the cell. The protein is Small ribosomal subunit protein uS10 (RPS20) of Pongo abelii (Sumatran orangutan).